The following is a 404-amino-acid chain: Zinc metalloprotease Rip1 (404 aa).

A helical membrane pass occupies residues Met-1 to His-21. His-21 provides a ligand contact to Zn(2+). Glu-22 is a catalytic residue. His-25 is a binding site for Zn(2+). Residues Pro-104–Leu-124 form a helical membrane-spanning segment. Positions Val-121 to Gly-203 constitute a PDZ domain. Asp-202 is a binding site for Zn(2+). The next 2 membrane-spanning stretches (helical) occupy residues Leu-313–Leu-333 and Leu-373–Thr-393.

It belongs to the peptidase M50B family. The cofactor is Zn(2+).

The protein localises to the cell membrane. Its function is as follows. A probable intramembrane site-2 protease (S2P) that cleaves type-2 transmembrane proteins within their membrane-spanning domains. Cleaves PbpB (PBP3, FtsI); cleavage is inhibited by Wag31-PbpB interaction. Probably also cleaves anti-sigma factors RskA, RslA and RsmA. Regulated intramembrane proteolysis (RIP) occurs when an extracytoplasmic signal (possibly oxidative stress) triggers a concerted proteolytic cascade to transmit information and elicit cellular responses. The membrane-spanning regulatory substrate protein (includes anti-sigma factors RskA, RslA, RsmA, and PbpB in M.tuberculosis) is first cut extracytoplasmically (site-1 protease, S1P), then within the membrane itself (site-2 protease, S2P, this entry), while cytoplasmic proteases finish degrading the regulatory protein, liberating the effector protein (ECF sigma factors SigK, SigL and SigM). In Mycobacterium bovis (strain BCG / Pasteur 1173P2), this protein is Zinc metalloprotease Rip1 (rip1).